The sequence spans 495 residues: UDP-N-acetylmuramoyl-L-alanyl-D-glutamate--2,6-diaminopimelate ligase (495 aa).

UDP-N-acetyl-alpha-D-muramoyl-L-alanyl-D-glutamate is bound by residues L28, S30, and 45-47 (HRV). An ATP-binding site is contributed by 117-123 (GTNGKTT). Residues N158, 159 to 160 (TT), S186, Q192, and R194 each bind UDP-N-acetyl-alpha-D-muramoyl-L-alanyl-D-glutamate. N6-carboxylysine is present on K226. Meso-2,6-diaminopimelate contacts are provided by residues R394, 418-421 (DNPR), G469, and E473. The Meso-diaminopimelate recognition motif motif lies at 418–421 (DNPR).

It belongs to the MurCDEF family. MurE subfamily. Mg(2+) is required as a cofactor. Post-translationally, carboxylation is probably crucial for Mg(2+) binding and, consequently, for the gamma-phosphate positioning of ATP.

The protein resides in the cytoplasm. The catalysed reaction is UDP-N-acetyl-alpha-D-muramoyl-L-alanyl-D-glutamate + meso-2,6-diaminopimelate + ATP = UDP-N-acetyl-alpha-D-muramoyl-L-alanyl-gamma-D-glutamyl-meso-2,6-diaminopimelate + ADP + phosphate + H(+). It functions in the pathway cell wall biogenesis; peptidoglycan biosynthesis. In terms of biological role, catalyzes the addition of meso-diaminopimelic acid to the nucleotide precursor UDP-N-acetylmuramoyl-L-alanyl-D-glutamate (UMAG) in the biosynthesis of bacterial cell-wall peptidoglycan. The protein is UDP-N-acetylmuramoyl-L-alanyl-D-glutamate--2,6-diaminopimelate ligase of Histophilus somni (strain 129Pt) (Haemophilus somnus).